The sequence spans 680 residues: DNA-directed RNA polymerase subunit beta' (680 aa).

4 residues coordinate Zn(2+): cysteine 69, cysteine 71, cysteine 87, and cysteine 90. Residues aspartate 489, aspartate 491, and aspartate 493 each contribute to the Mg(2+) site.

Belongs to the RNA polymerase beta' chain family. RpoC1 subfamily. As to quaternary structure, in plastids the minimal PEP RNA polymerase catalytic core is composed of four subunits: alpha, beta, beta', and beta''. When a (nuclear-encoded) sigma factor is associated with the core the holoenzyme is formed, which can initiate transcription. Mg(2+) serves as cofactor. Zn(2+) is required as a cofactor.

The protein localises to the plastid. It localises to the chloroplast. It catalyses the reaction RNA(n) + a ribonucleoside 5'-triphosphate = RNA(n+1) + diphosphate. DNA-dependent RNA polymerase catalyzes the transcription of DNA into RNA using the four ribonucleoside triphosphates as substrates. The polypeptide is DNA-directed RNA polymerase subunit beta' (Carica papaya (Papaya)).